A 197-amino-acid polypeptide reads, in one-letter code: Nucleoid occlusion factor SlmA (197 aa).

One can recognise an HTH tetR-type domain in the interval isoleucine 7–leucine 67. Positions threonine 30–phenylalanine 49 form a DNA-binding region, H-T-H motif.

This sequence belongs to the nucleoid occlusion factor SlmA family. In terms of assembly, homodimer. Interacts with FtsZ.

The protein localises to the cytoplasm. Its subcellular location is the nucleoid. Functionally, required for nucleoid occlusion (NO) phenomenon, which prevents Z-ring formation and cell division over the nucleoid. Acts as a DNA-associated cell division inhibitor that binds simultaneously chromosomal DNA and FtsZ, and disrupts the assembly of FtsZ polymers. SlmA-DNA-binding sequences (SBS) are dispersed on non-Ter regions of the chromosome, preventing FtsZ polymerization at these regions. This is Nucleoid occlusion factor SlmA from Shewanella oneidensis (strain ATCC 700550 / JCM 31522 / CIP 106686 / LMG 19005 / NCIMB 14063 / MR-1).